The primary structure comprises 355 residues: Protein pelota homolog (355 aa).

This sequence belongs to the eukaryotic release factor 1 family. Pelota subfamily. As to quaternary structure, monomer. The cofactor is a divalent metal cation.

It localises to the cytoplasm. May function in recognizing stalled ribosomes, interact with stem-loop structures in stalled mRNA molecules, and effect endonucleolytic cleavage of the mRNA. May play a role in the release non-functional ribosomes and degradation of damaged mRNAs. Has endoribonuclease activity. The protein is Protein pelota homolog of Natronomonas pharaonis (strain ATCC 35678 / DSM 2160 / CIP 103997 / JCM 8858 / NBRC 14720 / NCIMB 2260 / Gabara) (Halobacterium pharaonis).